Here is a 632-residue protein sequence, read N- to C-terminus: Phosphatidylinositol-3,5-bisphosphate 3-phosphatase MTMR8 (632 aa).

Positions 126–500 (GWELISVVND…LHFKFWCGMY (375 aa)) constitute a Myotubularin phosphatase domain. A 1,2-diacyl-sn-glycero-3-phospho-(1D-myo-inositol-3,5-bisphosphate) contacts are provided by asparagine 250, asparagine 275, and isoleucine 276. The a 1,2-diacyl-sn-glycero-3-phospho-(1D-myo-inositol-3-phosphate) site is built by asparagine 250, asparagine 275, and isoleucine 276. Cysteine 338 serves as the catalytic Phosphocysteine intermediate. Positions 339, 340, 341, 342, 343, 344, 380, and 384 each coordinate a 1,2-diacyl-sn-glycero-3-phospho-(1D-myo-inositol-3,5-bisphosphate). Serine 339, aspartate 340, glycine 341, tryptophan 342, aspartate 343, and arginine 344 together coordinate a 1,2-diacyl-sn-glycero-3-phospho-(1D-myo-inositol-3-phosphate). Phosphate contacts are provided by serine 339 and aspartate 340. Tryptophan 342, aspartate 343, and arginine 344 together coordinate phosphate. An a 1,2-diacyl-sn-glycero-3-phospho-(1D-myo-inositol-3-phosphate)-binding site is contributed by arginine 384. The disordered stretch occupies residues 545 to 632 (LPDPAGPINT…HSKEEVQESS (88 aa)). Basic and acidic residues predominate over residues 602–632 (EPAANEHDLSSKDKPVFVETEHSKEEVQESS).

The protein belongs to the protein-tyrosine phosphatase family. Non-receptor class myotubularin subfamily. In terms of assembly, homodimer.

It localises to the nucleus envelope. The catalysed reaction is a 1,2-diacyl-sn-glycero-3-phospho-(1D-myo-inositol-3,5-bisphosphate) + H2O = a 1,2-diacyl-sn-glycero-3-phospho-(1D-myo-inositol-5-phosphate) + phosphate. It carries out the reaction a 1,2-diacyl-sn-glycero-3-phospho-(1D-myo-inositol-3-phosphate) + H2O = a 1,2-diacyl-sn-glycero-3-phospho-(1D-myo-inositol) + phosphate. It catalyses the reaction 1,2-dioctanoyl-sn-glycero-3-phospho-(1D-myo-inositol-3,5-bisphosphate) + H2O = 1,2-dioctanoyl-sn-glycero-3-phospho-(1D-myo-inositol-5-phosphate) + phosphate. Functionally, lipid phosphatase that specifically dephosphorylates the D-3 position of phosphatidylinositol 3-phosphate and phosphatidylinositol 3,5-bisphosphate, generating phosphatidylinositol and phosphatidylinositol 5-phosphate. This Danio rerio (Zebrafish) protein is Phosphatidylinositol-3,5-bisphosphate 3-phosphatase MTMR8 (mtmr8).